The sequence spans 563 residues: Lipase 1 (563 aa).

Residues 1–19 form the signal peptide; it reads MVSKTFFLAAALNVVGTLA. Gln20 is subject to Pyrrolidone carboxylic acid. Cys80 and Cys124 are oxidised to a cystine. The Acyl-ester intermediate role is filled by Ser236. A disulfide bridge links Cys295 with Cys307. Asn302 is a glycosylation site (N-linked (GlcNAc...) asparagine). The Charge relay system role is filled by Glu373. A glycan (N-linked (GlcNAc...) asparagine) is linked at Asn383. The Charge relay system role is filled by His482.

The protein belongs to the type-B carboxylesterase/lipase family. In terms of assembly, monomer.

It is found in the secreted. It catalyses the reaction a triacylglycerol + H2O = a diacylglycerol + a fatty acid + H(+). In terms of biological role, hydrolyzes all ester bonds in triglyceride and displays a high affinity for triolein. For unsaturated substrates having long fatty acyl chains (C18:2 cis-9, cis-12 and C18:3 cis-9, cis-12, cis-15) GCL I shows higher specific activity than GCL II, whereas GCL II shows higher specific activity against saturated substrates having short fatty acid chains (C8, C10, C12 and C14). In Geotrichum candidum (Oospora lactis), this protein is Lipase 1 (LIP1).